Here is a 608-residue protein sequence, read N- to C-terminus: Scaffold protein salvador (608 aa).

Disordered stretches follow at residues 17–37 (SRRN…YMKK), 64–145 (STSP…SQNS), 157–202 (MRRQ…YDAD), 220–243 (PHSP…QQHA), 264–293 (QPRY…HTQL), and 345–425 (PQHH…ELPL). Over residues 22–37 (EKSQHKEGVVGKYMKK) the composition is skewed to basic and acidic residues. Residues 32–38 (GKYMKKD) carry the Ferm-binding motif (FBM) motif. Positions 64–89 (STSPSCEFHPRSSSTSRNTYSCTDSQ) are enriched in polar residues. Basic residues predominate over residues 108 to 125 (SHSHPHSLPHPSHPHVRS). Composition is skewed to low complexity over residues 160–172 (QQSS…TSSP), 229–242 (PPQQ…HQQH), and 275–289 (QQQQ…QQLQ). Positions 274–294 (MQQQQQQQQQQQQQLQHTQLA) form a coiled coil. Residues 358 to 373 (GSGGGSLSGSGRGGSS) are compositionally biased toward gly residues. Phosphoserine occurs at positions 413 and 416. WW domains lie at 423-456 (LPLP…HPLE) and 458-491 (EGLP…HPCL). An SARAH domain is found at 552-599 (LLQFNMFSLPELEGFDSMLVRLFKQELGTIVGFYERYRRALILEKNRR).

In terms of assembly, interacts with Wts via its WW domains. Interacts (via FBM motif) with Mer (via FERM domain). Interacts with Kibra. Interacts with Hpo (via SARAH domain). Interacts with jub. Phosphorylated by Hpo. Third instar larvae eye disk, expressed in a stripe in the morphogenetic furrow, decreases in the region of the second mitotic wave (SMW) and increases once again posterior to the SMW.

Functionally, plays a key role in the Hippo/SWH (Sav/Wts/Hpo) signaling pathway, a signaling pathway that plays a pivotal role in organ size control and tumor suppression by restricting proliferation and promoting apoptosis. The core of this pathway is composed of a kinase cascade wherein Hippo (Hpo), in complex with its regulatory protein Salvador (Sav), phosphorylates and activates Warts (Wts) in complex with its regulatory protein Mats, which in turn phosphorylates and inactivates the Yorkie (Yki) oncoprotein. The Hippo/SWH signaling pathway inhibits the activity of the transcriptional complex formed by Scalloped (sd) and Yki and the target genes of this pathway include cyclin-E (cycE), diap1 and bantam. Required for cell cycle exit in eye imaginal disk and hid-induced apoptotic cell deaths that are part of normal retinal development. Activation of Drice in eye imaginal disk by either Hid or Rpr is almost completely blocked by Sav expression. The chain is Scaffold protein salvador (sav) from Drosophila melanogaster (Fruit fly).